We begin with the raw amino-acid sequence, 358 residues long: 3-isopropylmalate dehydrogenase (358 aa).

An NAD(+)-binding site is contributed by Gly77 to Glu90. Substrate-binding residues include Arg98, Arg108, Arg137, and Asp226. Positions 226, 250, and 254 each coordinate Mg(2+). Gly284 to Asn296 lines the NAD(+) pocket.

The protein belongs to the isocitrate and isopropylmalate dehydrogenases family. LeuB type 1 subfamily. As to quaternary structure, homodimer. The cofactor is Mg(2+). Mn(2+) serves as cofactor.

It is found in the cytoplasm. The catalysed reaction is (2R,3S)-3-isopropylmalate + NAD(+) = 4-methyl-2-oxopentanoate + CO2 + NADH. The protein operates within amino-acid biosynthesis; L-leucine biosynthesis; L-leucine from 3-methyl-2-oxobutanoate: step 3/4. In terms of biological role, catalyzes the oxidation of 3-carboxy-2-hydroxy-4-methylpentanoate (3-isopropylmalate) to 3-carboxy-4-methyl-2-oxopentanoate. The product decarboxylates to 4-methyl-2 oxopentanoate. The chain is 3-isopropylmalate dehydrogenase from Mannheimia succiniciproducens (strain KCTC 0769BP / MBEL55E).